A 460-amino-acid polypeptide reads, in one-letter code: MSFDFIKDRDKKVHFIGIGGISMSGLAAVLLNSGYKVSGSDFKESEILKKLRLSGADIYIGHSEKNIKDVDLVVYTAAIPENNPELIYAKENNIELMNRAEFLGSIMKGHKYNVAISGAHGKTTCTSMLSNITLKANLDPTILVGGELDIIGGNFRIGSSDYFITEACEYKRSFLSFFPYVGVILNIDADHLDYYKDIDEITETFGQFADLIPNDGYLIGYVGDSRVKEILFKAKCNTLSYGFENADVTARNITFNEKGCASFDVYKHNDKLFDLTLSNPGEHNILNALSSICVSLIFDVNYDDIICGLSECKGAHKRFEYKGEVNGVTVIDDYAHHPVEIKATLNTSKKIPHNKTFCVFQPHTYTRTKTLFDEFTDAFFDADEVVLMDIYAAREKDTGLVSSNDLGVALRAKGVKCTNVHSHDEALEYLKNSAKPNDLLLTVGAGDVVIVGEKYLNQGK.

118–124 (GAHGKTT) lines the ATP pocket.

The protein belongs to the MurCDEF family.

The protein resides in the cytoplasm. The enzyme catalyses UDP-N-acetyl-alpha-D-muramate + L-alanine + ATP = UDP-N-acetyl-alpha-D-muramoyl-L-alanine + ADP + phosphate + H(+). The protein operates within cell wall biogenesis; peptidoglycan biosynthesis. Functionally, cell wall formation. The protein is UDP-N-acetylmuramate--L-alanine ligase of Clostridium botulinum (strain Eklund 17B / Type B).